The following is a 102-amino-acid chain: MNGQNIRIRLKAFDHRILDASTREIVSTAKRTGASVRGPVPLPTRIEKFTVNRSPHIDKKSREQFEMRTHKRLLDIVDPTPQTVDALMKLDLAAGVDVEIKL.

The protein belongs to the universal ribosomal protein uS10 family. Part of the 30S ribosomal subunit.

In terms of biological role, involved in the binding of tRNA to the ribosomes. This chain is Small ribosomal subunit protein uS10, found in Rhizobium etli (strain CIAT 652).